The primary structure comprises 332 residues: Melanocortin receptor 4 (332 aa).

Residues 1-43 (MVNSTHRGMHASLHLWNRSSHRLHSNASESLGKGYSDGGCYEQ) are Extracellular-facing. 3 N-linked (GlcNAc...) asparagine glycosylation sites follow: N3, N17, and N26. Cystine bridges form between C40–C279 and C271–C277. A helical membrane pass occupies residues 44-69 (LFVSPEVFVTLGVISLLENILVIVAI). Over 70–81 (AKNKNLHSPMYF) the chain is Cytoplasmic. Residues 82–106 (FICSLAVADMLVSVSNGSETIVITL) form a helical membrane-spanning segment. Positions 100, 122, and 126 each coordinate Ca(2+). Topologically, residues 107–123 (LNSTDTDTQSFTVNIDN) are extracellular. Residues 124-145 (VIDSVICSSLLASICSLLSIAV) form a helical membrane-spanning segment. At 146–165 (DRYFTIFYALQYHNIMTVKR) the chain is on the cytoplasmic side. Residues 166-186 (VRIIISCIWAACTVSGILFII) traverse the membrane as a helical segment. At 187 to 191 (YSDSS) the chain is on the extracellular side. Residues 192–215 (AVIICLITMFFTMLALMASLYVHM) form a helical membrane-spanning segment. Residues 216-248 (FLMARLHIKRIAVLPGTGAIRQGANMKGAITLT) lie on the Cytoplasmic side of the membrane. A helical membrane pass occupies residues 249–271 (ILIGVFVVCWAPFFLHLIFYISC). Topologically, residues 272–280 (PQNPYCVCF) are extracellular. The chain crosses the membrane as a helical span at residues 281–304 (MSHFNLYLILIMCNSVIDPLIYAL). The Cytoplasmic segment spans residues 305-332 (RSQELRKTFKEIICCYPLGGLCDLSSRY). The S-palmitoyl cysteine moiety is linked to residue C318.

This sequence belongs to the G-protein coupled receptor 1 family. Homodimer; disulfide-linked, also forms higher order oligomers. Interacts with GNAS. Interacts with ATRNL1. Interacts with MGRN1; this interaction competes with GNAS-binding and thus inhibits agonist-induced cAMP production. Interacts with MRAP and MRAP2; these associated factors increase ligand-sensitivity and generation of cAMP.

The protein localises to the cell membrane. Functionally, hormone receptor that acts as a key component of the leptin-melanocortin pathway at the intersection of homeostatic maintenance of energetic state. Plays a role in regulating food intake: activation by a stimulating hormone such as anorexigenic alpha-melanocyte stimulating hormone (alpha-MSH) inhibits appetite, whereas binding to a natural antagonist like Agouti-related protein/AGRP promotes appetite. G-protein-coupled receptor that activates conventional Galphas signaling leading to induction of anorexogenic signaling in the hypothalamus to result in negative energy balance. Regulates the firing activity of neurons from the hypothalamus by alpha-MSH and AGRP independently of Galphas signaling by ligand-induced coupling of closure of inwardly rectifying potassium channel KCNJ13. In intestinal epithelial cells, plays a role in the inhibition of hepatic glucose production via nesfatin-1/NUCB2 leading to increased cyclic adenosine monophosphate (cAMP) levels and glucagon-like peptide 1 (GLP-1) secretion in the intestinal epithelium. The protein is Melanocortin receptor 4 (MC4R) of Macaca fascicularis (Crab-eating macaque).